Here is a 669-residue protein sequence, read N- to C-terminus: Putative heme-binding protein rrnAC3100 (669 aa).

Histidine 181 lines the heme pocket. Disordered stretches follow at residues 260 to 351 (RVPT…PDVS) and 451 to 477 (LGGS…ESSQ). The 89-residue stretch at 579-667 (GTMGMFYTVK…VLADRPRHVF (89 aa)) folds into the ABM domain.

It in the N-terminal section; belongs to the ChdC family.

This chain is Putative heme-binding protein rrnAC3100, found in Haloarcula marismortui (strain ATCC 43049 / DSM 3752 / JCM 8966 / VKM B-1809) (Halobacterium marismortui).